Reading from the N-terminus, the 521-residue chain is Glutamyl-tRNA(Gln) amidotransferase subunit A, mitochondrial (521 aa).

Active-site charge relay system residues include K61 and S139. The active-site Acyl-ester intermediate is S163.

This sequence belongs to the amidase family. GatA subfamily. Subunit of the heterotrimeric GatCAB amidotransferase (AdT) complex, composed of A, B and C subunits.

It is found in the mitochondrion. It catalyses the reaction L-glutamyl-tRNA(Gln) + L-glutamine + ATP + H2O = L-glutaminyl-tRNA(Gln) + L-glutamate + ADP + phosphate + H(+). In terms of biological role, allows the formation of correctly charged Gln-tRNA(Gln) through the transamidation of misacylated Glu-tRNA(Gln) in the mitochondria. The reaction takes place in the presence of glutamine and ATP through an activated gamma-phospho-Glu-tRNA(Gln). The chain is Glutamyl-tRNA(Gln) amidotransferase subunit A, mitochondrial from Ajellomyces capsulatus (strain G186AR / H82 / ATCC MYA-2454 / RMSCC 2432) (Darling's disease fungus).